We begin with the raw amino-acid sequence, 85 residues long: Serine protease inhibitor Cvsi-2 (85 aa).

The first 18 residues, 1 to 18 (MKVAVVVALLCFVCYTAA), serve as a signal peptide directing secretion.

In terms of processing, contains 6 disulfide bonds. As to expression, detected in hemolymph (at protein level). Within the digestive gland expression is limited to the basophil cells of the digestive diverticula.

Its subcellular location is the secreted. In terms of biological role, slow-binding inhibitor of serine proteases. The inhibitor rapidly binds to the protease forming a weak enzyme-inhibitor complex, and this is followed by a slow isomerization forming a tight-binding enzyme-inhibitor complex. Active against subtilisin A with a dissociation constant of 0.18 nM. Active against perkinsin. Not active against thermolysin, papain or pepsin. In Crassostrea virginica (Eastern oyster), this protein is Serine protease inhibitor Cvsi-2.